The following is a 784-amino-acid chain: E3 UFM1-protein ligase 1 homolog (784 aa).

Residues 401–481 (QKGNSSAQDL…GGGGGGNKKT (81 aa)) are disordered.

Belongs to the UFL1 family.

In terms of biological role, E3 UFM1-protein ligase that mediates ufmylation of target proteins. This chain is E3 UFM1-protein ligase 1 homolog, found in Drosophila ananassae (Fruit fly).